Reading from the N-terminus, the 430-residue chain is Enolase (430 aa).

Residues 1 to 140 are sufficient for secretion; that stretch reads MPYIVDVYAR…YQYLGGFNSK (140 aa). At Thr141 the chain carries Phosphothreonine. Gln163 serves as a coordination point for (2R)-2-phosphoglycerate. The active-site Proton donor is the Glu205. Position 242 (Asp242) interacts with Mg(2+). At Ser259 the chain carries Phosphoserine. Tyr281 is subject to Phosphotyrosine. Mg(2+) contacts are provided by Glu287 and Asp314. Ser325 is modified (phosphoserine). 4 residues coordinate (2R)-2-phosphoglycerate: Lys339, Arg368, Ser369, and Lys390. The active-site Proton acceptor is the Lys339.

Belongs to the enolase family. As to quaternary structure, homooctamer. Component of the RNA degradosome complex composed of rny, rnjA, rnjB, pnp, pfkA and eno (although rnjA and rnjB's presence is controversial). Mg(2+) serves as cofactor. Post-translationally, phosphorylated during sporulation.

It localises to the cytoplasm. It is found in the secreted. The protein resides in the cell surface. The enzyme catalyses (2R)-2-phosphoglycerate = phosphoenolpyruvate + H2O. The protein operates within carbohydrate degradation; glycolysis; pyruvate from D-glyceraldehyde 3-phosphate: step 4/5. Its activity is regulated as follows. Covalent binding to the substrate (probably 2-PG) at Lys-339 of a small fraction of enolase causes inactivation of the enzyme, and possibly serves as a signal for the export of the protein. Citrate acts as a non-competitive inhibitor for both forward and reverse reactions, probably by chelating Mg(2+). Functionally, catalyzes the reversible conversion of 2-phosphoglycerate (2-PG) into phosphoenolpyruvate (PEP). It is essential for the degradation of carbohydrates via glycolysis. Its function is as follows. A component of the RNA degradosome, a multi-enzyme complex involved in RNA processing and messenger RNA degradation. The chain is Enolase from Bacillus subtilis (strain 168).